We begin with the raw amino-acid sequence, 316 residues long: Transaldolase (316 aa).

The Schiff-base intermediate with substrate role is filled by lysine 132.

The protein belongs to the transaldolase family. Type 1 subfamily. In terms of assembly, homodimer.

Its subcellular location is the cytoplasm. It carries out the reaction D-sedoheptulose 7-phosphate + D-glyceraldehyde 3-phosphate = D-erythrose 4-phosphate + beta-D-fructose 6-phosphate. It participates in carbohydrate degradation; pentose phosphate pathway; D-glyceraldehyde 3-phosphate and beta-D-fructose 6-phosphate from D-ribose 5-phosphate and D-xylulose 5-phosphate (non-oxidative stage): step 2/3. Its function is as follows. Transaldolase is important for the balance of metabolites in the pentose-phosphate pathway. The polypeptide is Transaldolase (Vibrio parahaemolyticus serotype O3:K6 (strain RIMD 2210633)).